The primary structure comprises 152 residues: Ribosome maturation factor RimP (152 aa).

Belongs to the RimP family.

The protein resides in the cytoplasm. In terms of biological role, required for maturation of 30S ribosomal subunits. The chain is Ribosome maturation factor RimP from Rubrobacter xylanophilus (strain DSM 9941 / JCM 11954 / NBRC 16129 / PRD-1).